The chain runs to 37 residues: Large ribosomal subunit protein bL36c (37 aa).

The protein belongs to the bacterial ribosomal protein bL36 family.

It is found in the plastid. The protein localises to the cyanelle. The protein is Large ribosomal subunit protein bL36c (rpl36) of Cyanophora paradoxa.